A 723-amino-acid polypeptide reads, in one-letter code: Epidermal growth factor receptor kinase substrate 8-like protein 1 (723 aa).

The PTB domain maps to 35–164 (QYPVNHLVTF…LHNYRSGRGE (130 aa)). Residues 162–183 (RGERRAAALRATQEELQRDRSP) are compositionally biased toward basic and acidic residues. Disordered regions lie at residues 162 to 247 (RGER…PRGP), 442 to 477 (KQLQ…LESE), 537 to 589 (GPRL…GLDP), and 609 to 636 (LAQG…GSDA). Serine 182 carries the phosphoserine modification. Threonine 187 is subject to Phosphothreonine. Residues 478–537 (TAGKWVLCNYDFQARNSSELSVKQRDVLEVLDDSRKWWKVRDPAGQEGYVPYNILTPYPG) enclose the SH3 domain. Over residues 543–552 (SQSPARSLNS) the composition is skewed to polar residues. Residues 553–568 (TPPPPPAPAPAPPPAL) show a composition bias toward pro residues. Basic and acidic residues predominate over residues 571 to 580 (PRWDRPRWDS). A coiled-coil region spans residues 689–719 (VQRSLLEDKEKVSELEAVMEKQKKKVEGEVE).

The protein belongs to the EPS8 family. Interacts with ABI1. Part of a complex that contains SOS1, ABI1 and EPS8L2. Associates with F-actin. As to expression, detected in placenta.

Its subcellular location is the cytoplasm. Its function is as follows. Stimulates guanine exchange activity of SOS1. May play a role in membrane ruffling and remodeling of the actin cytoskeleton. The protein is Epidermal growth factor receptor kinase substrate 8-like protein 1 (EPS8L1) of Homo sapiens (Human).